The primary structure comprises 572 residues: Phosphoenolpyruvate-protein phosphotransferase (572 aa).

His-191 functions as the Tele-phosphohistidine intermediate in the catalytic mechanism. Residues Arg-298 and Arg-334 each coordinate phosphoenolpyruvate. 2 residues coordinate Mg(2+): Glu-433 and Asp-457. Residues 456 to 457 (ND) and Arg-467 each bind phosphoenolpyruvate. Cys-504 functions as the Proton donor in the catalytic mechanism.

Belongs to the PEP-utilizing enzyme family. As to quaternary structure, homodimer. It depends on Mg(2+) as a cofactor.

Its subcellular location is the cytoplasm. The enzyme catalyses L-histidyl-[protein] + phosphoenolpyruvate = N(pros)-phospho-L-histidyl-[protein] + pyruvate. Functionally, general (non sugar-specific) component of the phosphoenolpyruvate-dependent sugar phosphotransferase system (sugar PTS). This major carbohydrate active-transport system catalyzes the phosphorylation of incoming sugar substrates concomitantly with their translocation across the cell membrane. Enzyme I transfers the phosphoryl group from phosphoenolpyruvate (PEP) to the phosphoryl carrier protein (HPr). The polypeptide is Phosphoenolpyruvate-protein phosphotransferase (ptsI) (Staphylococcus aureus (strain COL)).